We begin with the raw amino-acid sequence, 157 residues long: SsrA-binding protein (157 aa).

The tract at residues 134–157 (HDKRESEKKRDWGREKGRLLRARG) is disordered. Basic and acidic residues predominate over residues 135–151 (DKRESEKKRDWGREKGR).

Belongs to the SmpB family.

It is found in the cytoplasm. In terms of biological role, required for rescue of stalled ribosomes mediated by trans-translation. Binds to transfer-messenger RNA (tmRNA), required for stable association of tmRNA with ribosomes. tmRNA and SmpB together mimic tRNA shape, replacing the anticodon stem-loop with SmpB. tmRNA is encoded by the ssrA gene; the 2 termini fold to resemble tRNA(Ala) and it encodes a 'tag peptide', a short internal open reading frame. During trans-translation Ala-aminoacylated tmRNA acts like a tRNA, entering the A-site of stalled ribosomes, displacing the stalled mRNA. The ribosome then switches to translate the ORF on the tmRNA; the nascent peptide is terminated with the 'tag peptide' encoded by the tmRNA and targeted for degradation. The ribosome is freed to recommence translation, which seems to be the essential function of trans-translation. This Nitrobacter hamburgensis (strain DSM 10229 / NCIMB 13809 / X14) protein is SsrA-binding protein.